The primary structure comprises 71 residues: Glucose-repressible gene protein (71 aa).

A disordered region spans residues 19–71; that stretch reads TATASKEANKDVAKDSNQGVGTRLNAAGDAISDKVSENKHDAKAEAHKQGATH. The span at 49–71 shows a compositional bias: basic and acidic residues; it reads ISDKVSENKHDAKAEAHKQGATH.

The chain is Glucose-repressible gene protein (grg-1) from Neurospora crassa (strain ATCC 24698 / 74-OR23-1A / CBS 708.71 / DSM 1257 / FGSC 987).